Here is a 476-residue protein sequence, read N- to C-terminus: Bifunctional protein HldE (476 aa).

The interval 1–318 (MKLDLTVLEQ…YTALHGDKLA (318 aa)) is ribokinase. Position 195–198 (195–198 (NLGE)) interacts with ATP. The active site involves Asp264. Positions 344 to 476 (MTNGCFDILH…MIDTILDREG (133 aa)) are cytidylyltransferase.

This sequence in the N-terminal section; belongs to the carbohydrate kinase PfkB family. In the C-terminal section; belongs to the cytidylyltransferase family. Homodimer.

The enzyme catalyses D-glycero-beta-D-manno-heptose 7-phosphate + ATP = D-glycero-beta-D-manno-heptose 1,7-bisphosphate + ADP + H(+). The catalysed reaction is D-glycero-beta-D-manno-heptose 1-phosphate + ATP + H(+) = ADP-D-glycero-beta-D-manno-heptose + diphosphate. The protein operates within nucleotide-sugar biosynthesis; ADP-L-glycero-beta-D-manno-heptose biosynthesis; ADP-L-glycero-beta-D-manno-heptose from D-glycero-beta-D-manno-heptose 7-phosphate: step 1/4. Its pathway is nucleotide-sugar biosynthesis; ADP-L-glycero-beta-D-manno-heptose biosynthesis; ADP-L-glycero-beta-D-manno-heptose from D-glycero-beta-D-manno-heptose 7-phosphate: step 3/4. Its function is as follows. Catalyzes the phosphorylation of D-glycero-D-manno-heptose 7-phosphate at the C-1 position to selectively form D-glycero-beta-D-manno-heptose-1,7-bisphosphate. Catalyzes the ADP transfer from ATP to D-glycero-beta-D-manno-heptose 1-phosphate, yielding ADP-D-glycero-beta-D-manno-heptose. This Chromohalobacter salexigens (strain ATCC BAA-138 / DSM 3043 / CIP 106854 / NCIMB 13768 / 1H11) protein is Bifunctional protein HldE.